A 224-amino-acid chain; its full sequence is Heme response regulator HssR (224 aa).

One can recognise a Response regulatory domain in the interval glutamine 3–leucine 116. Residue aspartate 52 is modified to 4-aspartylphosphate. Residues asparagine 124–asparagine 222 constitute a DNA-binding region (ompR/PhoB-type).

Phosphorylated by HssS.

Its subcellular location is the cytoplasm. Member of the two-component regulatory system HssS/HssR involved in intracellular heme homeostasis and tempering of staphylococcal virulence. Phosphorylated HssR binds to a direct repeat sequence within hrtAB promoter and activates the expression of hrtAB, an efflux pump, in response to extracellular heme, hemin, hemoglobin or blood. The chain is Heme response regulator HssR (hssR) from Staphylococcus aureus (strain COL).